We begin with the raw amino-acid sequence, 412 residues long: Multifunctional CCA protein (412 aa).

The ATP site is built by G8 and R11. CTP contacts are provided by G8 and R11. Positions 21 and 23 each coordinate Mg(2+). Positions 91, 137, and 140 each coordinate ATP. The CTP site is built by R91, R137, and R140. One can recognise an HD domain in the interval T228–W329.

It belongs to the tRNA nucleotidyltransferase/poly(A) polymerase family. Bacterial CCA-adding enzyme type 1 subfamily. Monomer. Can also form homodimers and oligomers. Requires Mg(2+) as cofactor. The cofactor is Ni(2+).

The catalysed reaction is a tRNA precursor + 2 CTP + ATP = a tRNA with a 3' CCA end + 3 diphosphate. The enzyme catalyses a tRNA with a 3' CCA end + 2 CTP + ATP = a tRNA with a 3' CCACCA end + 3 diphosphate. Its function is as follows. Catalyzes the addition and repair of the essential 3'-terminal CCA sequence in tRNAs without using a nucleic acid template. Adds these three nucleotides in the order of C, C, and A to the tRNA nucleotide-73, using CTP and ATP as substrates and producing inorganic pyrophosphate. tRNA 3'-terminal CCA addition is required both for tRNA processing and repair. Also involved in tRNA surveillance by mediating tandem CCA addition to generate a CCACCA at the 3' terminus of unstable tRNAs. While stable tRNAs receive only 3'-terminal CCA, unstable tRNAs are marked with CCACCA and rapidly degraded. The sequence is that of Multifunctional CCA protein from Escherichia coli O1:K1 / APEC.